The primary structure comprises 256 residues: NAD-dependent protein deacylase 2 (256 aa).

The Deacetylase sirtuin-type domain maps to 1–256; the sequence is MDSHSPIATV…MPQVVSHIYR (256 aa). NAD(+) contacts are provided by residues 25–44 and 108–111; these read GAGLSADSGMPTYRGLGGLY and QNID. The active-site Proton acceptor is the H128. Zn(2+) is bound by residues C136, C139, C158, and C161. Residues 199-201, 225-227, and A243 each bind NAD(+); these read GTT and NPG.

It belongs to the sirtuin family. Class III subfamily. Zn(2+) is required as a cofactor.

The protein resides in the cytoplasm. The catalysed reaction is N(6)-acetyl-L-lysyl-[protein] + NAD(+) + H2O = 2''-O-acetyl-ADP-D-ribose + nicotinamide + L-lysyl-[protein]. In terms of biological role, NAD-dependent protein deacetylase which modulates the activities of several proteins which are inactive in their acetylated form. The sequence is that of NAD-dependent protein deacylase 2 (cobB2) from Pseudomonas aeruginosa (strain ATCC 15692 / DSM 22644 / CIP 104116 / JCM 14847 / LMG 12228 / 1C / PRS 101 / PAO1).